Consider the following 356-residue polypeptide: Glycerophosphodiester phosphodiesterase (356 aa).

The first 20 residues, 1 to 20 (MRGTYCVTLWGGVFAALVAG), serve as a signal peptide directing secretion. Residue Cys21 is the site of N-palmitoyl cysteine attachment. Residue Cys21 is the site of S-diacylglycerol cysteine attachment. The 290-residue stretch at 25-314 (RMIVAYRGAA…CHVHTVRKET (290 aa)) folds into the GP-PDE domain.

Belongs to the glycerophosphoryl diester phosphodiesterase family. Palmitoylated upon expression of a fusion protein with first 40 residues fused to PhoA in E.coli.

The protein resides in the cell inner membrane. The enzyme catalyses a sn-glycero-3-phosphodiester + H2O = an alcohol + sn-glycerol 3-phosphate + H(+). In terms of biological role, glycerophosphoryl diester phosphodiesterase hydrolyzes deacylated phospholipids to G3P and the corresponding alcohols. Its function is as follows. Binds human IgA, IgD and the Fc portion of IgG but not IgM, which may contribute to evasion of the human immune system. The protein is Glycerophosphodiester phosphodiesterase (glpQ) of Treponema pallidum (strain Nichols).